The primary structure comprises 602 residues: Elongation factor 4 (602 aa).

Positions 6-188 constitute a tr-type G domain; it reads DRIRNFCIIA…RIVRDVPPPG (183 aa). Residues 18 to 23 and 135 to 138 contribute to the GTP site; these read DHGKST and NKID.

Belongs to the TRAFAC class translation factor GTPase superfamily. Classic translation factor GTPase family. LepA subfamily.

The protein resides in the cell membrane. The enzyme catalyses GTP + H2O = GDP + phosphate + H(+). Functionally, required for accurate and efficient protein synthesis under certain stress conditions. May act as a fidelity factor of the translation reaction, by catalyzing a one-codon backward translocation of tRNAs on improperly translocated ribosomes. Back-translocation proceeds from a post-translocation (POST) complex to a pre-translocation (PRE) complex, thus giving elongation factor G a second chance to translocate the tRNAs correctly. Binds to ribosomes in a GTP-dependent manner. The polypeptide is Elongation factor 4 (Desulforudis audaxviator (strain MP104C)).